Here is a 359-residue protein sequence, read N- to C-terminus: 2-amino-3-carboxymuconate-6-semialdehyde decarboxylase (359 aa).

Residues 1 to 13 (MENKETTTTTTTT) are compositionally biased toward low complexity. Residues 1–21 (MENKETTTTTTTTNNGSDKKK) are disordered. Zn(2+)-binding residues include His29 and His31. Arg70 serves as a coordination point for substrate. Positions 197 and 314 each coordinate Zn(2+).

This sequence belongs to the metallo-dependent hydrolases superfamily. ACMSD family. As to quaternary structure, monomer.

It carries out the reaction 2-amino-3-carboxymuconate 6-semialdehyde + H(+) = 2-aminomuconate 6-semialdehyde + CO2. Its pathway is secondary metabolite metabolism; quinolate metabolism. Converts alpha-amino-beta-carboxymuconate-epsilon-semialdehyde (ACMS) to alpha-aminomuconate semialdehyde (AMS). The chain is 2-amino-3-carboxymuconate-6-semialdehyde decarboxylase (acmsd) from Dictyostelium discoideum (Social amoeba).